Reading from the N-terminus, the 631-residue chain is Fusexin 1 (631 aa).

Residues 1 to 19 (MRRAALILAFVLFIGLSSA) form the signal peptide. The domain I N-terminus stretch occupies residues 20 to 90 (TVTSADSITY…THQDSKLKYS (71 aa)). Residues 20-537 (TVTSADSITY…NLFGGSGSGD (518 aa)) lie on the Extracellular side of the membrane. Positions 91-170 (TSTSDELRDI…KLATPAYIDN (80 aa)) are domain II N-terminus. Positions 112, 146, 149, and 150 each coordinate Ca(2+). A disulfide bridge connects residues cysteine 125 and cysteine 155. Residues 143–148 (SVTSPV) are fusion loop, required for fusogenic activity, not required for membrane surface localization. A domain I central section region spans residues 171–224 (PDEIFTAKAELQAGDKTIQSATLSNGDAGDGTVTDLGDSKISWNGNLDLGASEP). Residues 225–316 (ENSRVIALYS…KDSSLDTGSF (92 aa)) form a domain II C-terminus region. A domain I C-terminus region spans residues 317-348 (VYDTPELLSYPSFTVYVDAGENGYIEVTKPTG). Residues 349–455 (DPDIISTSST…SVSVTGIQQS (107 aa)) form a domain III region. 3 cysteine pairs are disulfide-bonded: cysteine 389-cysteine 432, cysteine 457-cysteine 477, and cysteine 490-cysteine 506. The tract at residues 443–467 (DSTSVSVTGIQQSECNPGDQRREKN) is disordered. The domain IV, required for fusogenic activity stretch occupies residues 456–509 (ECNPGDQRREKNENDRWEIYTCQDNGLTYEYDVTCAEDEKAVAQGDNQFSCEKQ). The segment at 510–537 (DDDSGGGDNTGSDSGLFSNLFGGSGSGD) is stem. The helical transmembrane segment at 538-558 (LLTQVHTALSILAGLVAGFFG) threads the bilayer. Residues 559–590 (YRGARWIHGETDIKGGFKLESRNVSRVKRGSP) lie on the Cytoplasmic side of the membrane. Residues 591-611 (VAGIVGAVLGFVVGYGVASVF) traverse the membrane as a helical segment. Histidine 612 is a topological domain (extracellular). The chain crosses the membrane as a helical span at residues 613–630 (PVVQIIVVLGIAVGLYYF). Position 631 (arginine 631) is a topological domain, cytoplasmic.

Belongs to the HAP2/GCS1 family. Fusexin 1 subfamily. Monomer in solution, crystallizes as a trimer in high salt (2.5 M NaCl, 0.2 M CaCl(2)). The trimer is stabilized by interdomain contacts and numerous Ca(2+) and Na(+) ions.

The protein resides in the cell surface. The protein localises to the cell membrane. In terms of biological role, exhibits fusogenic activity. Mediates cell-cell fusion in mammalian cells when present in both cells (bilateral fusion). The sequence is that of Fusexin 1 from Uncultured archaeon.